We begin with the raw amino-acid sequence, 344 residues long: L-sulfolactate dehydrogenase (344 aa).

This sequence belongs to the LDH2/MDH2 oxidoreductase family.

The protein localises to the cytoplasm. The enzyme catalyses a (2S)-2-hydroxycarboxylate + NAD(+) = a 2-oxocarboxylate + NADH + H(+). It participates in cofactor biosynthesis; coenzyme M biosynthesis; sulfoacetaldehyde from phosphoenolpyruvate and sulfite: step 3/4. It functions in the pathway cofactor biosynthesis; 5,6,7,8-tetrahydromethanopterin biosynthesis. Catalyzes the reduction of sulfopyruvate to (R)-sulfolactate much more efficiently than the reverse reaction. Also catalyzes the reduction of oxaloacetate, alpha-ketoglutarate, and to a much lower extent, KHTCA, but not pyruvate. Involved in the biosynthesis of both coenzyme M (with (R)-sulfolactate) and methanopterin (with alpha-ketoglutarate). The protein is L-sulfolactate dehydrogenase (comC) of Methanocaldococcus jannaschii (strain ATCC 43067 / DSM 2661 / JAL-1 / JCM 10045 / NBRC 100440) (Methanococcus jannaschii).